The primary structure comprises 585 residues: Arginine--tRNA ligase (585 aa).

The short motif at 126-136 (PNIAKEMHVGH) is the 'HIGH' region element.

Belongs to the class-I aminoacyl-tRNA synthetase family. In terms of assembly, monomer.

It is found in the cytoplasm. The enzyme catalyses tRNA(Arg) + L-arginine + ATP = L-arginyl-tRNA(Arg) + AMP + diphosphate. The chain is Arginine--tRNA ligase from Trichodesmium erythraeum (strain IMS101).